We begin with the raw amino-acid sequence, 785 residues long: Adhesion G-protein coupled receptor G7 (785 aa).

The N-terminal stretch at Met1–Gly26 is a signal peptide. Topologically, residues Leu27 to Ser435 are extracellular. N-linked (GlcNAc...) asparagine glycans are attached at residues Asn82, Asn122, Asn133, Asn152, Asn159, Asn178, Asn195, Asn239, Asn289, Asn348, Asn400, and Asn408. A GAIN-B domain is found at Phe271–Tyr425. Intrachain disulfides connect Cys380–Cys407 and Cys395–Cys409. Residues Cys380–Tyr425 form a GPS region. A helical transmembrane segment spans residues Asn436–Thr456. Residues Arg457–Thr465 lie on the Cytoplasmic side of the membrane. A helical membrane pass occupies residues Trp466 to Ile486. The Extracellular segment spans residues Glu487 to Thr523. A helical membrane pass occupies residues Ala524–Ala544. Topologically, residues Thr545 to His561 are cytoplasmic. A helical membrane pass occupies residues Phe562 to Ile582. Residues Gly583–Ser623 are Extracellular-facing. Residues Phe624–Val644 traverse the membrane as a helical segment. At Lys645–Ser668 the chain is on the cytoplasmic side. A helical transmembrane segment spans residues Thr669–Ser689. Residues Asn690 to Arg694 lie on the Extracellular side of the membrane. Residues Ile695 to Leu715 traverse the membrane as a helical segment. At Tyr716–Ser785 the chain is on the cytoplasmic side.

It belongs to the G-protein coupled receptor 2 family. Adhesion G-protein coupled receptor (ADGR) subfamily. As to expression, selectively expressed in the intestinal tissues.

The protein localises to the membrane. In terms of biological role, orphan receptor. The sequence is that of Adhesion G-protein coupled receptor G7 (Adgrg7) from Mus musculus (Mouse).